The sequence spans 713 residues: tRNA 5-methylaminomethyl-2-thiouridine biosynthesis bifunctional protein MnmC (713 aa).

The segment at 1–300 (MTAEPNKPCQ…MAAILSSATP (300 aa)) is tRNA (mnm(5)s(2)U34)-methyltransferase. Residues 306-713 (IGGGLASAHL…LRKLLKGKAL (408 aa)) are FAD-dependent cmnm(5)s(2)U34 oxidoreductase.

The protein in the N-terminal section; belongs to the methyltransferase superfamily. tRNA (mnm(5)s(2)U34)-methyltransferase family. In the C-terminal section; belongs to the DAO family. The cofactor is FAD.

The protein resides in the cytoplasm. It catalyses the reaction 5-aminomethyl-2-thiouridine(34) in tRNA + S-adenosyl-L-methionine = 5-methylaminomethyl-2-thiouridine(34) in tRNA + S-adenosyl-L-homocysteine + H(+). In terms of biological role, catalyzes the last two steps in the biosynthesis of 5-methylaminomethyl-2-thiouridine (mnm(5)s(2)U) at the wobble position (U34) in tRNA. Catalyzes the FAD-dependent demodification of cmnm(5)s(2)U34 to nm(5)s(2)U34, followed by the transfer of a methyl group from S-adenosyl-L-methionine to nm(5)s(2)U34, to form mnm(5)s(2)U34. In Shewanella baltica (strain OS155 / ATCC BAA-1091), this protein is tRNA 5-methylaminomethyl-2-thiouridine biosynthesis bifunctional protein MnmC.